Consider the following 160-residue polypeptide: Phosphopantetheine adenylyltransferase (160 aa).

Thr-10 contacts substrate. ATP is bound by residues Thr-10 to Phe-11 and His-18. The substrate site is built by Lys-42, Leu-74, and Arg-88. ATP contacts are provided by residues Gly-89 to Arg-91, Glu-99, and Asn-124 to Thr-130.

This sequence belongs to the bacterial CoaD family. As to quaternary structure, homohexamer. It depends on Mg(2+) as a cofactor.

Its subcellular location is the cytoplasm. It catalyses the reaction (R)-4'-phosphopantetheine + ATP + H(+) = 3'-dephospho-CoA + diphosphate. It functions in the pathway cofactor biosynthesis; coenzyme A biosynthesis; CoA from (R)-pantothenate: step 4/5. Its function is as follows. Reversibly transfers an adenylyl group from ATP to 4'-phosphopantetheine, yielding dephospho-CoA (dPCoA) and pyrophosphate. In Aeromonas salmonicida (strain A449), this protein is Phosphopantetheine adenylyltransferase.